The following is a 76-amino-acid chain: DNA-directed RNA polymerase subunit omega (76 aa).

It belongs to the RNA polymerase subunit omega family. In terms of assembly, in cyanobacteria the RNAP catalytic core is composed of 2 alpha, 1 beta, 1 beta', 1 gamma and 1 omega subunit. When a sigma factor is associated with the core the holoenzyme is formed, which can initiate transcription.

It catalyses the reaction RNA(n) + a ribonucleoside 5'-triphosphate = RNA(n+1) + diphosphate. Promotes RNA polymerase assembly. Latches the N- and C-terminal regions of the beta' subunit thereby facilitating its interaction with the beta and alpha subunits. The sequence is that of DNA-directed RNA polymerase subunit omega from Acaryochloris marina (strain MBIC 11017).